Reading from the N-terminus, the 80-residue chain is Large ribosomal subunit protein bL31B (80 aa).

The protein belongs to the bacterial ribosomal protein bL31 family. Type B subfamily. In terms of assembly, part of the 50S ribosomal subunit.

The protein is Large ribosomal subunit protein bL31B of Xylella fastidiosa (strain M23).